A 78-amino-acid chain; its full sequence is Hainantoxin-XX.3 (78 aa).

A signal peptide spans 1-23 (MKSATLLALSFLLIASCFLICEA). A propeptide spanning residues 24–47 (EHSRYEEHEILEENMGDVVNLEQR) is cleaved from the precursor. 3 disulfide bridges follow: Cys-49–Cys-62, Cys-56–Cys-66, and Cys-61–Cys-77.

This sequence belongs to the hainantoxin family. 20 subfamily. Expressed by the venom gland.

The protein resides in the secreted. In terms of biological role, putative ion channel inhibitor. This is Hainantoxin-XX.3 from Cyriopagopus hainanus (Chinese bird spider).